The sequence spans 182 residues: Ferritin heavy chain (182 aa).

The residue at position 1 (Met-1) is an N-acetylmethionine. Thr-2 is modified (N-acetylthreonine; in Ferritin heavy chain, N-terminally processed). Residues 11–160 form the Ferritin-like diiron domain; it reads QNYHQDAEAA…DHVTNLRKMG (150 aa). Residues Glu-28, Glu-63, His-66, Glu-108, and Gln-142 each coordinate Fe cation.

This sequence belongs to the ferritin family. In terms of assembly, oligomer of 24 subunits. There are two types of subunits: L (light) chain and H (heavy) chain. The major chain can be light or heavy, depending on the species and tissue type. The functional molecule forms a roughly spherical shell with a diameter of 12 nm and contains a central cavity into which the insoluble mineral iron core is deposited. Interacts with NCOA4; NCOA4 promotes targeting of the iron-binding ferritin complex to autolysosomes following starvation or iron depletion.

It is found in the cytoplasm. It localises to the cytoplasmic vesicle. The protein localises to the autophagosome. Its subcellular location is the autolysosome. It carries out the reaction 4 Fe(2+) + O2 + 4 H(+) = 4 Fe(3+) + 2 H2O. Its function is as follows. Stores iron in a soluble, non-toxic, readily available form. Important for iron homeostasis. Has ferroxidase activity. Iron is taken up in the ferrous form and deposited as ferric hydroxides after oxidation. Also plays a role in delivery of iron to cells. Mediates iron uptake in capsule cells of the developing kidney. Degraded to release iron upon autophagy activation by nutrient starvation. In Mus musculus (Mouse), this protein is Ferritin heavy chain (Fth1).